A 1515-amino-acid polypeptide reads, in one-letter code: Homeobox protein cut-like 1 (1515 aa).

A coiled-coil region spans residues 56 to 361 (LLKSFQGEID…VKKELNTLKS (306 aa)). Over residues 393-405 (ENATLRISNSDLS) the composition is skewed to polar residues. Disordered stretches follow at residues 393–453 (ENAT…SPAG), 509–546 (PYST…ISEG), 644–666 (PKRR…TGSD), and 680–702 (LQVQ…NSDD). Positions 422 to 432 (GPLPASPPPQL) are enriched in pro residues. Ser427 is subject to Phosphoserine. Polar residues predominate over residues 436-447 (TGEQVSNTNGTH). Residues 514–544 (SISSPSPLQQSPDVNGMAPSPSQSESAGSIS) show a composition bias toward low complexity. A DNA-binding region (CUT 1) is located at residues 540 to 627 (AGSISEGEEI…ILALRSIQGR (88 aa)). Position 761 is a phosphoserine (Ser761). 2 disordered regions span residues 769–871 (PETS…SASA) and 884–923 (YSQS…PSVP). Residues Lys783, Lys809, and Lys840 each participate in a glycyl lysine isopeptide (Lys-Gly) (interchain with G-Cter in SUMO2) cross-link. The segment covering 828 to 852 (PERRNLTSSEETKADETTASGKERA) has biased composition (basic and acidic residues). Composition is skewed to polar residues over residues 853–868 (GSSQ…QGPS) and 884–906 (YSQS…NSPL). Ser904 is modified (phosphoserine). Positions 929–1016 (QYEVYMYQEV…QGVLPVQGQQ (88 aa)) form a DNA-binding region, CUT 2. Over residues 1032–1044 (QQGCVSSESTPKT) the composition is skewed to polar residues. The disordered stretch occupies residues 1032 to 1105 (QQGCVSSEST…QPTTPLPLSG (74 aa)). The span at 1045–1061 (SASCSPAPESPMSSSES) shows a compositional bias: low complexity. Residues Ser1054 and Ser1064 each carry the phosphoserine modification. Positions 1112 to 1199 (QELVAMSPEL…VEKLMDMKRM (88 aa)) form a DNA-binding region, CUT 3. Residues 1207-1242 (RRHSSVSDSQPCEPPSVGIDYSQGASPQPQHQLKKP) are disordered. Positions 1239–1298 (LKKPRVVLAPEEKEALKRAYQQKPYPSPKTIEELATQLNLKTSTVINWFHNYRSRIRREL) form a DNA-binding region, homeobox. The residue at position 1265 (Ser1265) is a Phosphoserine. A Glycyl lysine isopeptide (Lys-Gly) (interchain with G-Cter in SUMO2) cross-link involves residue Lys1279. Residues 1307–1488 (SQGQAGASDS…AGARDNPVRK (182 aa)) form a disordered region. The segment covering 1313–1328 (ASDSPSARSSRAAPSS) has biased composition (low complexity). The segment covering 1331–1343 (DSCDGVEATDAEE) has biased composition (acidic residues). At Ser1332 the chain carries Phosphoserine. The span at 1365–1378 (ADREEATQPAEKAK) shows a compositional bias: basic and acidic residues. The segment covering 1406–1468 (ADAPAPVPSL…ANAPARRPSS (63 aa)) has biased composition (low complexity). Ser1468, Ser1496, and Ser1506 each carry phosphoserine.

The protein belongs to the CUT homeobox family. As to quaternary structure, interacts with BANP. Interacts with SATB1 (via DNA-binding domains); the interaction inhibits the attachment of both proteins to DNA. Phosphorylated by PKA. In terms of processing, as cells progress into S phase, a fraction of CUX1 molecules is proteolytically processed into N-terminally truncated proteins of 110 kDa by CTSL. Cell cycle-dependent processing of CUX1 serves to generate a CDP/Cux p110 with distinct DNA binding and transcriptional properties. In terms of tissue distribution, testis-specific where it is expressed in germ cells.

The protein resides in the nucleus. Functionally, transcription factor involved in the control of neuronal differentiation in the brain. Regulates dendrite development and branching, and dendritic spine formation in cortical layers II-III. Also involved in the control of synaptogenesis. In addition, it has probably a broad role in mammalian development as a repressor of developmentally regulated gene expression. May act by preventing binding of positively-activing CCAAT factors to promoters. Component of nf-munr repressor; binds to the matrix attachment regions (MARs) (5' and 3') of the immunoglobulin heavy chain enhancer. Represses T-cell receptor (TCR) beta enhancer function by binding to MARbeta, an ATC-rich DNA sequence located upstream of the TCR beta enhancer. Binds to the TH enhancer; may require the basic helix-loop-helix protein TCF4 as a coactivator. Its function is as follows. Plays a role in cell cycle progression, in particular at the G1/S transition. As cells progress into S phase, a fraction of CUX1 molecules is proteolytically processed into N-terminally truncated proteins of 110 kDa. While CUX1 only transiently binds to DNA and carries the CCAAT-displacement activity, CDP/Cux p110 makes a stable interaction with DNA and stimulates expression of genes such as POLA1. The sequence is that of Homeobox protein cut-like 1 from Mus musculus (Mouse).